The primary structure comprises 519 residues: Cytosol aminopeptidase (519 aa).

Serine 42 carries the phosphoserine modification. N6-succinyllysine is present on lysine 45. Serine 54 is modified (phosphoserine). Lysine 61 and lysine 103 each carry N6-succinyllysine. Phosphoserine is present on residues serine 180 and serine 194. 2 residues coordinate Zn(2+): leucine 202 and methionine 203. Lysine 221 carries the post-translational modification N6-acetyllysine; alternate. Lysine 221 carries the post-translational modification N6-succinyllysine; alternate. Serine 238 carries the post-translational modification Phosphoserine. 2 residues coordinate Zn(2+): lysine 282 and aspartate 287. Substrate is bound by residues lysine 282, aspartate 287, serine 292, and lysine 294. Aspartate 287 provides a ligand contact to Mg(2+). Residue lysine 294 is part of the active site. Zn(2+)-binding residues include arginine 303, aspartate 305, aspartate 364, and glutamate 366. 2 residues coordinate substrate: aspartate 305 and aspartate 364. Mg(2+) is bound by residues aspartate 364 and glutamate 366. Arginine 368 is an active-site residue. Lysine 455 carries the N6-acetyllysine; alternate modification. Lysine 455 is subject to N6-succinyllysine; alternate. Residue lysine 476 is modified to N6-succinyllysine. N6-acetyllysine; alternate is present on lysine 489. The residue at position 489 (lysine 489) is an N6-succinyllysine; alternate.

Belongs to the peptidase M17 family. In terms of assembly, homohexamer. Zn(2+) serves as cofactor. It depends on Mn(2+) as a cofactor.

The protein localises to the cytoplasm. It carries out the reaction Release of an N-terminal amino acid, Xaa-|-Yaa-, in which Xaa is preferably Leu, but may be other amino acids including Pro although not Arg or Lys, and Yaa may be Pro. Amino acid amides and methyl esters are also readily hydrolyzed, but rates on arylamides are exceedingly low.. The catalysed reaction is an S-substituted L-cysteinylglycine + H2O = an S-substituted L-cysteine + glycine. It catalyses the reaction L-cysteinylglycine + H2O = L-cysteine + glycine. The enzyme catalyses S-benzyl-L-cysteinylglycine + H2O = S-benzyl-L-cysteine + glycine. It carries out the reaction Release of N-terminal proline from a peptide.. Its activity is regulated as follows. Bimane-S-cysteinylglycine-hydrolyzing activity is inhibited by o-phenanthroline or bestatin, and is activated by the addition of zinc chloride. Functionally, cytosolic metallopeptidase that catalyzes the removal of unsubstituted N-terminal hydrophobic amino acids from various peptides. The presence of Zn(2+) ions is essential for the peptidase activity, and the association with other cofactors can modulate the substrate spectificity of the enzyme. For instance, in the presence of Mn(2+), it displays a specific Cys-Gly hydrolyzing activity of Cys-Gly-S-conjugates. Involved in the metabolism of glutathione and in the degradation of glutathione S-conjugates, which may play a role in the control of the cell redox status. The chain is Cytosol aminopeptidase from Rattus norvegicus (Rat).